Reading from the N-terminus, the 856-residue chain is MISPDKRYEADTNLYNPSEIEKKWQSIWTENNLYKTDELTENSDKFYALSMFPYPSGNLHMGHVRNYVITDLIARFQRFKGKSVLHPMGWDAFGLPAENAAIERGISPSVWTKKNISHMKSQLKLLGLSVDWDREFATCDENYYIWTQYLFLELYKSGLVYQKESEVNWDPIDNTVLANEQVDSEGKSWRSGAVVEKKLLKQWFLRITNYADELLKDLEKLDNWPERVKIMQDNWIGKSIGANINFNINTNPEKNITVFTTRPDTLFGVTYLAISVNHSLIKKITDQETIQDIENLKQYLKDNKNNELEKIGIKTSLIAINPVNSEPIPIWVASYVLDEYGTGAVMGVPAHDLRDFEFAKKNNIDIKQVIVKDKSEQSNELDNAYVENGYLINSNHYNGLANTIAKLKIAEEGVNNGWAENKIQYRLRDWLISRQRYWGCPIPIVNCKKCGAVPLNQSDLPVSLPKDIEISANKINALGNNNDWINTTCPKCGIGARKETDTMDTFMCSSWYFLRYPSSKCSTKPFEKNEINKWLPVDQYVGGVEHAILHLLYARFFTKALRDNELFDIDEPFKKLLTQGMVQSAAYKNNKTGKYVSPSDITDLSNPTDPIDNSKLEVLFEKMSKSKYNGIDPESVIKKYGADTARMFILFKAPPEKDLEWGDTDVEGQFRFLSRIWKLYINCAKNINSKSNSHPDKEKSLIKSMNIAIKEISNDILNNQFNTAISELMKFYNSLSNSINDINNNLKIDALKTFCILLAPFAPHIAEEIWHLIGFKKSVHLEHWPSFNAEALKEDSYELVIQVNGKVRDKVNINNDMSEDQIKELTLKRPNILKWTQDKEIRKIIIVKGKIMNIVV.

Positions 53 to 63 (PYPSGNLHMGH) match the 'HIGH' region motif. The 'KMSKS' region motif lies at 622 to 626 (KMSKS). K625 lines the ATP pocket.

This sequence belongs to the class-I aminoacyl-tRNA synthetase family.

It localises to the cytoplasm. The catalysed reaction is tRNA(Leu) + L-leucine + ATP = L-leucyl-tRNA(Leu) + AMP + diphosphate. This chain is Leucine--tRNA ligase, found in Prochlorococcus marinus (strain AS9601).